Reading from the N-terminus, the 220-residue chain is Small ribosomal subunit protein eS1 (220 aa).

This sequence belongs to the eukaryotic ribosomal protein eS1 family.

The polypeptide is Small ribosomal subunit protein eS1 (Methanococcus vannielii (strain ATCC 35089 / DSM 1224 / JCM 13029 / OCM 148 / SB)).